Here is a 410-residue protein sequence, read N- to C-terminus: Putative competence-damage inducible protein (410 aa).

The protein belongs to the CinA family.

The sequence is that of Putative competence-damage inducible protein from Clostridium beijerinckii (strain ATCC 51743 / NCIMB 8052) (Clostridium acetobutylicum).